The primary structure comprises 223 residues: Probable GTP-binding protein EngB (223 aa).

Residues 25 to 199 (TGVEIAFAGR…SRLLQDWFDE (175 aa)) enclose the EngB-type G domain. GTP contacts are provided by residues 33–40 (GRSNAGKS), 60–64 (GRTQH), 78–81 (DLPG), 145–148 (TKAD), and 178–180 (FSS). Mg(2+) is bound by residues Ser-40 and Thr-62.

The protein belongs to the TRAFAC class TrmE-Era-EngA-EngB-Septin-like GTPase superfamily. EngB GTPase family. Mg(2+) is required as a cofactor.

In terms of biological role, necessary for normal cell division and for the maintenance of normal septation. The polypeptide is Probable GTP-binding protein EngB (Nitrosomonas eutropha (strain DSM 101675 / C91 / Nm57)).